The primary structure comprises 220 residues: Large ribosomal subunit protein uL3 (220 aa).

Positions 145 to 169 (GPASHGSKFHRRPGSSGNRTWPGRV) are disordered.

The protein belongs to the universal ribosomal protein uL3 family. In terms of assembly, part of the 50S ribosomal subunit. Forms a cluster with proteins L14 and L19.

In terms of biological role, one of the primary rRNA binding proteins, it binds directly near the 3'-end of the 23S rRNA, where it nucleates assembly of the 50S subunit. In Bdellovibrio bacteriovorus (strain ATCC 15356 / DSM 50701 / NCIMB 9529 / HD100), this protein is Large ribosomal subunit protein uL3.